A 237-amino-acid chain; its full sequence is Putative N-acetylmannosamine-6-phosphate 2-epimerase (237 aa).

Belongs to the NanE family.

It catalyses the reaction an N-acyl-D-glucosamine 6-phosphate = an N-acyl-D-mannosamine 6-phosphate. It functions in the pathway amino-sugar metabolism; N-acetylneuraminate degradation; D-fructose 6-phosphate from N-acetylneuraminate: step 3/5. Its function is as follows. Converts N-acetylmannosamine-6-phosphate (ManNAc-6-P) to N-acetylglucosamine-6-phosphate (GlcNAc-6-P). This Caldanaerobacter subterraneus subsp. tengcongensis (strain DSM 15242 / JCM 11007 / NBRC 100824 / MB4) (Thermoanaerobacter tengcongensis) protein is Putative N-acetylmannosamine-6-phosphate 2-epimerase.